The following is a 401-amino-acid chain: 1-deoxy-D-xylulose 5-phosphate reductoisomerase (401 aa).

Positions 11, 12, 13, 14, 38, 39, and 125 each coordinate NADPH. Lys126 is a binding site for 1-deoxy-D-xylulose 5-phosphate. Residue Glu127 participates in NADPH binding. Residue Asp151 participates in Mn(2+) binding. The 1-deoxy-D-xylulose 5-phosphate site is built by Ser152, Glu153, Ser179, and His202. Glu153 is a binding site for Mn(2+). Gly208 is an NADPH binding site. 1-deoxy-D-xylulose 5-phosphate contacts are provided by Ser215, Asn220, Lys221, and Glu224. Mn(2+) is bound at residue Glu224.

Belongs to the DXR family. It depends on Mg(2+) as a cofactor. Requires Mn(2+) as cofactor.

The catalysed reaction is 2-C-methyl-D-erythritol 4-phosphate + NADP(+) = 1-deoxy-D-xylulose 5-phosphate + NADPH + H(+). The protein operates within isoprenoid biosynthesis; isopentenyl diphosphate biosynthesis via DXP pathway; isopentenyl diphosphate from 1-deoxy-D-xylulose 5-phosphate: step 1/6. In terms of biological role, catalyzes the NADPH-dependent rearrangement and reduction of 1-deoxy-D-xylulose-5-phosphate (DXP) to 2-C-methyl-D-erythritol 4-phosphate (MEP). The sequence is that of 1-deoxy-D-xylulose 5-phosphate reductoisomerase from Paraburkholderia xenovorans (strain LB400).